Here is a 139-residue protein sequence, read N- to C-terminus: Large ribosomal subunit protein uL13 (139 aa).

It belongs to the universal ribosomal protein uL13 family. In terms of assembly, part of the 50S ribosomal subunit.

Functionally, this protein is one of the early assembly proteins of the 50S ribosomal subunit, although it is not seen to bind rRNA by itself. It is important during the early stages of 50S assembly. The polypeptide is Large ribosomal subunit protein uL13 (Aliarcobacter butzleri (strain RM4018) (Arcobacter butzleri)).